Here is a 273-residue protein sequence, read N- to C-terminus: Dermonecrotic toxin LruSicTox-alphaIC1b (273 aa).

H5 is an active-site residue. Residues E25 and D27 each contribute to the Mg(2+) site. Catalysis depends on H41, which acts as the Nucleophile. Disulfide bonds link C45/C51 and C47/C190. D85 provides a ligand contact to Mg(2+).

The protein belongs to the arthropod phospholipase D family. Class II subfamily. Mg(2+) is required as a cofactor. As to expression, expressed by the venom gland.

Its subcellular location is the secreted. The catalysed reaction is an N-(acyl)-sphingosylphosphocholine = an N-(acyl)-sphingosyl-1,3-cyclic phosphate + choline. The enzyme catalyses an N-(acyl)-sphingosylphosphoethanolamine = an N-(acyl)-sphingosyl-1,3-cyclic phosphate + ethanolamine. It catalyses the reaction a 1-acyl-sn-glycero-3-phosphocholine = a 1-acyl-sn-glycero-2,3-cyclic phosphate + choline. It carries out the reaction a 1-acyl-sn-glycero-3-phosphoethanolamine = a 1-acyl-sn-glycero-2,3-cyclic phosphate + ethanolamine. Its function is as follows. Dermonecrotic toxins cleave the phosphodiester linkage between the phosphate and headgroup of certain phospholipids (sphingolipid and lysolipid substrates), forming an alcohol (often choline) and a cyclic phosphate. This toxin acts on sphingomyelin (SM). It may also act on ceramide phosphoethanolamine (CPE), lysophosphatidylcholine (LPC) and lysophosphatidylethanolamine (LPE), but not on lysophosphatidylserine (LPS), and lysophosphatidylglycerol (LPG). It acts by transphosphatidylation, releasing exclusively cyclic phosphate products as second products. Induces dermonecrosis, hemolysis, increased vascular permeability, edema, inflammatory response, and platelet aggregation. The polypeptide is Dermonecrotic toxin LruSicTox-alphaIC1b (Loxosceles rufescens (Mediterranean recluse spider)).